Consider the following 364-residue polypeptide: Aminomethyltransferase (364 aa).

This sequence belongs to the GcvT family. The glycine cleavage system is composed of four proteins: P, T, L and H.

It catalyses the reaction N(6)-[(R)-S(8)-aminomethyldihydrolipoyl]-L-lysyl-[protein] + (6S)-5,6,7,8-tetrahydrofolate = N(6)-[(R)-dihydrolipoyl]-L-lysyl-[protein] + (6R)-5,10-methylene-5,6,7,8-tetrahydrofolate + NH4(+). Functionally, the glycine cleavage system catalyzes the degradation of glycine. The chain is Aminomethyltransferase from Shewanella halifaxensis (strain HAW-EB4).